We begin with the raw amino-acid sequence, 52 residues long: Creatine kinase B-type (52 aa).

The region spanning 1–52 (AKVLTLDLYKKLRDKSTPSGFTLDDIIQNEHLGYVLTCPSNLGTXLRAXVHV) is the Phosphagen kinase C-terminal domain. One can recognise a Phosphagen kinase N-terminal domain in the interval 1–52 (AKVLTLDLYKKLRDKSTPSGFTLDDIIQNEHLGYVLTCPSNLGTXLRAXVHV). Positions 13 and 47 each coordinate ATP.

It belongs to the ATP:guanido phosphotransferase family. In terms of assembly, dimer of identical or non-identical chains, which can be either B (brain type) or M (muscle type). With MM being the major form in skeletal muscle and myocardium, MB existing in myocardium, and BB existing in many tissues, especially brain. As to expression, expressed in rectal gland, brain, skeletal muscle (at protein level).

The protein localises to the cytoplasm. It localises to the cytosol. It is found in the mitochondrion. The protein resides in the basal cell membrane. The enzyme catalyses creatine + ATP = N-phosphocreatine + ADP + H(+). Reversibly catalyzes the transfer of phosphate between ATP and various phosphogens (e.g. creatine phosphate). Creatine kinase isoenzymes play a central role in energy transduction in tissues with large, fluctuating energy demands, such as skeletal muscle, heart, brain and spermatozoa. The polypeptide is Creatine kinase B-type (Squalus acanthias (Spiny dogfish)).